Consider the following 172-residue polypeptide: Protein sym-1 (172 aa).

A run of 5 helical transmembrane segments spans residues 13 to 33 (PLLT…VAAQ), 52 to 72 (MVLY…RFLQ), 94 to 114 (GLFA…LEGT), 128 to 148 (LSTN…VVPL), and 152 to 172 (VLFV…LNGQ).

The protein belongs to the peroxisomal membrane protein PXMP2/4 family.

Its subcellular location is the mitochondrion inner membrane. Its function is as follows. May be involved in cellular response to stress. Required to maintain mitochondrial DNA (mtDNA) integrity and stability. The sequence is that of Protein sym-1 (sym-1) from Neurospora crassa (strain ATCC 24698 / 74-OR23-1A / CBS 708.71 / DSM 1257 / FGSC 987).